The following is a 149-amino-acid chain: Small ribosomal subunit protein uS19w (149 aa).

It belongs to the universal ribosomal protein uS19 family.

The protein resides in the cytoplasm. The polypeptide is Small ribosomal subunit protein uS19w (RPS15E) (Arabidopsis thaliana (Mouse-ear cress)).